The sequence spans 235 residues: Protein LIFEGUARD 1 (235 aa).

The next 7 membrane-spanning stretches (helical) occupy residues 33 to 53 (YSIL…VYFV), 67 to 87 (LAVF…LLAF), 95 to 115 (CIVL…CCSL), 120 to 140 (IVLE…IYTF), 149 to 169 (FSFL…FTLL), 178 to 198 (LSSM…IIFD), and 212 to 232 (ITAA…LLGI).

It belongs to the BI1 family. Expressed at very low in leaves.

The protein localises to the membrane. (Microbial infection) Facilitates the development of the powdery mildew fungus E.cruciferarum. In terms of biological role, (Microbial infection) May prevent cell death upon A.alternata f.sp. lycopersici (AAL) toxin treatment. The sequence is that of Protein LIFEGUARD 1 from Arabidopsis thaliana (Mouse-ear cress).